The chain runs to 180 residues: Putative manganese efflux pump MntP (180 aa).

6 consecutive transmembrane segments (helical) span residues 6 to 26, 34 to 54, 67 to 87, 103 to 123, 130 to 150, and 159 to 179; these read LFAL…GIGI, IALI…LGWY, ASIA…WDTI, GGLL…GFTL, LVLA…AGLT, and IGER…VKLF.

This sequence belongs to the MntP (TC 9.B.29) family.

It is found in the cell membrane. Functionally, probably functions as a manganese efflux pump. This Desulforamulus reducens (strain ATCC BAA-1160 / DSM 100696 / MI-1) (Desulfotomaculum reducens) protein is Putative manganese efflux pump MntP.